Here is a 226-residue protein sequence, read N- to C-terminus: Leucyl/phenylalanyl-tRNA--protein transferase (226 aa).

It belongs to the L/F-transferase family.

It localises to the cytoplasm. It catalyses the reaction N-terminal L-lysyl-[protein] + L-leucyl-tRNA(Leu) = N-terminal L-leucyl-L-lysyl-[protein] + tRNA(Leu) + H(+). The enzyme catalyses N-terminal L-arginyl-[protein] + L-leucyl-tRNA(Leu) = N-terminal L-leucyl-L-arginyl-[protein] + tRNA(Leu) + H(+). The catalysed reaction is L-phenylalanyl-tRNA(Phe) + an N-terminal L-alpha-aminoacyl-[protein] = an N-terminal L-phenylalanyl-L-alpha-aminoacyl-[protein] + tRNA(Phe). Functions in the N-end rule pathway of protein degradation where it conjugates Leu, Phe and, less efficiently, Met from aminoacyl-tRNAs to the N-termini of proteins containing an N-terminal arginine or lysine. This chain is Leucyl/phenylalanyl-tRNA--protein transferase, found in Pseudomonas aeruginosa (strain ATCC 15692 / DSM 22644 / CIP 104116 / JCM 14847 / LMG 12228 / 1C / PRS 101 / PAO1).